Here is a 504-residue protein sequence, read N- to C-terminus: ATP synthase subunit alpha (504 aa).

ATP is bound at residue 169–176 (GDRKTGKT).

This sequence belongs to the ATPase alpha/beta chains family. In terms of assembly, F-type ATPases have 2 components, CF(1) - the catalytic core - and CF(0) - the membrane proton channel. CF(1) has five subunits: alpha(3), beta(3), gamma(1), delta(1), epsilon(1). CF(0) has three main subunits: a(1), b(2) and c(9-12). The alpha and beta chains form an alternating ring which encloses part of the gamma chain. CF(1) is attached to CF(0) by a central stalk formed by the gamma and epsilon chains, while a peripheral stalk is formed by the delta and b chains.

The protein localises to the cell membrane. The catalysed reaction is ATP + H2O + 4 H(+)(in) = ADP + phosphate + 5 H(+)(out). In terms of biological role, produces ATP from ADP in the presence of a proton gradient across the membrane. The alpha chain is a regulatory subunit. The polypeptide is ATP synthase subunit alpha (Leuconostoc citreum (strain KM20)).